We begin with the raw amino-acid sequence, 700 residues long: Elongation factor G (700 aa).

Residues 8–290 (ERYRNIGISA…AVVEYLPAPT (283 aa)) form the tr-type G domain. GTP contacts are provided by residues 17-24 (AHIDAGKT), 88-92 (DTPGH), and 142-145 (NKMD).

The protein belongs to the TRAFAC class translation factor GTPase superfamily. Classic translation factor GTPase family. EF-G/EF-2 subfamily.

It localises to the cytoplasm. In terms of biological role, catalyzes the GTP-dependent ribosomal translocation step during translation elongation. During this step, the ribosome changes from the pre-translocational (PRE) to the post-translocational (POST) state as the newly formed A-site-bound peptidyl-tRNA and P-site-bound deacylated tRNA move to the P and E sites, respectively. Catalyzes the coordinated movement of the two tRNA molecules, the mRNA and conformational changes in the ribosome. The protein is Elongation factor G of Haemophilus influenzae (strain PittEE).